A 561-amino-acid polypeptide reads, in one-letter code: Carboxylesterase 4A (561 aa).

The first 20 residues, 1 to 20, serve as a signal peptide directing secretion; sequence MRWILCWSLTLCLMAQTALG. Cysteines 88 and 116 form a disulfide. N-linked (GlcNAc...) asparagine glycosylation occurs at Asn-214. Ser-221 (acyl-ester intermediate) is an active-site residue. Residues Cys-273 and Cys-284 are joined by a disulfide bond. Asn-276 is a glycosylation site (N-linked (GlcNAc...) asparagine). Glu-353 acts as the Charge relay system in catalysis. The N-linked (GlcNAc...) asparagine glycan is linked to Asn-388. His-467 serves as the catalytic Charge relay system.

It belongs to the type-B carboxylesterase/lipase family.

It is found in the secreted. In terms of biological role, probable carboxylesterase. The polypeptide is Carboxylesterase 4A (CES4A) (Homo sapiens (Human)).